The primary structure comprises 432 residues: Glutamyl-tRNA reductase (432 aa).

Residues 49-52 (TCNR), Ser101, 106-108 (ESQ), and Gln112 each bind substrate. The active-site Nucleophile is Cys50. 181–186 (GTGETI) is an NADP(+) binding site. Residues 410–432 (KPGYHHPTLQTTIVKTDETDPAS) form a disordered region.

Belongs to the glutamyl-tRNA reductase family. In terms of assembly, homodimer.

It catalyses the reaction (S)-4-amino-5-oxopentanoate + tRNA(Glu) + NADP(+) = L-glutamyl-tRNA(Glu) + NADPH + H(+). Its pathway is porphyrin-containing compound metabolism; protoporphyrin-IX biosynthesis; 5-aminolevulinate from L-glutamyl-tRNA(Glu): step 1/2. Catalyzes the NADPH-dependent reduction of glutamyl-tRNA(Glu) to glutamate 1-semialdehyde (GSA). The sequence is that of Glutamyl-tRNA reductase from Xylella fastidiosa (strain 9a5c).